The sequence spans 275 residues: MTQQLQSLIDQAWEDRANLSPKSAPADVREAVANVIGQLDRGALRVAEKQDGEWIVNQWIKKAVLLSFRLEDNAPMAAGGFTQFYDKVPSKFANYTAEDFAAGGFRVVPPAVARRGSFIAKNAVLMPSYVNIGAYVDEGTMVDTWATVGSCAQIGKNVHLSGGVGIGGVLEPLQANPVIIEDNCFIGARSEVVEGVIVEENSVISMGVYLGQSTKIYDRETGEVSYGRIPAGSVVVAGNLPSKDGSHSLYCAVIVKKVDAKTRAKVGLNELLRGD.

This sequence belongs to the transferase hexapeptide repeat family.

It localises to the cytoplasm. It catalyses the reaction (S)-2,3,4,5-tetrahydrodipicolinate + succinyl-CoA + H2O = (S)-2-succinylamino-6-oxoheptanedioate + CoA. Its pathway is amino-acid biosynthesis; L-lysine biosynthesis via DAP pathway; LL-2,6-diaminopimelate from (S)-tetrahydrodipicolinate (succinylase route): step 1/3. The protein is 2,3,4,5-tetrahydropyridine-2,6-dicarboxylate N-succinyltransferase of Ralstonia pickettii (strain 12J).